The following is a 436-amino-acid chain: Proline transporter 3 (436 aa).

11 consecutive transmembrane segments (helical) span residues 29–49 (SWFQAAFVLTTSINSAYVLGY), 52–72 (TVMVPLGWIGGVVGLILATAI), 118–138 (LFMINCGFIILAGSALKAVYV), 151–171 (FIAIAGLICAVFAIGIPHLSA), 172–192 (LGIWLAVSTILSLIYIVVAIV), 216–236 (LFTITGAAATLVFVFNTGMLP), 254–274 (LYFQFTVGVLPMFAVVFIGYW), 296–316 (ALANISAILQSVISLHIFASP), 345–365 (GGYIAVSTLLSALLPFLGDFM), 366–386 (SLTGAVSTFPLTFILANHMYY), and 405–425 (VVFFSLMSVAAAIAALRLIAL).

Belongs to the amino acid/polyamine transporter 2 family. Amino acid/auxin permease (AAAP) (TC 2.A.18.3) subfamily. Expressed in epidermal cells of leaves, sepals and petals.

Its subcellular location is the cell membrane. Proline transporter that mediates proline and glycine betaine transport. When expressed in a heterologous system (yeast), imports L-proline, glycine betaine and GABA across the plasma membrane. This is Proline transporter 3 (PROT3) from Arabidopsis thaliana (Mouse-ear cress).